The following is a 105-amino-acid chain: Large ribosomal subunit protein uL24 (105 aa).

Belongs to the universal ribosomal protein uL24 family. Part of the 50S ribosomal subunit.

Its function is as follows. One of two assembly initiator proteins, it binds directly to the 5'-end of the 23S rRNA, where it nucleates assembly of the 50S subunit. One of the proteins that surrounds the polypeptide exit tunnel on the outside of the subunit. This is Large ribosomal subunit protein uL24 from Rhodospirillum centenum (strain ATCC 51521 / SW).